The primary structure comprises 330 residues: Agamous-like MADS-box protein AGL75 (330 aa).

Positions 19-61 constitute an MADS-box domain; it reads TSLSNRLETIFKKASELCTLCDIEACVIYYGPDGELKTWPKEK.

In terms of assembly, interacts with MEE14/CBP1.

Its subcellular location is the nucleus. In terms of biological role, probable transcription factor that may function in the maintenance of the proper function of the central cell in pollen tube attraction. The sequence is that of Agamous-like MADS-box protein AGL75 from Arabidopsis thaliana (Mouse-ear cress).